Reading from the N-terminus, the 320-residue chain is Aspartate carbamoyltransferase catalytic subunit (320 aa).

Carbamoyl phosphate is bound by residues arginine 70 and threonine 71. Lysine 98 contributes to the L-aspartate binding site. Positions 120, 149, and 152 each coordinate carbamoyl phosphate. L-aspartate-binding residues include arginine 182 and arginine 237. Glycine 278 and proline 279 together coordinate carbamoyl phosphate.

This sequence belongs to the aspartate/ornithine carbamoyltransferase superfamily. ATCase family. In terms of assembly, heterododecamer (2C3:3R2) of six catalytic PyrB chains organized as two trimers (C3), and six regulatory PyrI chains organized as three dimers (R2).

The catalysed reaction is carbamoyl phosphate + L-aspartate = N-carbamoyl-L-aspartate + phosphate + H(+). The protein operates within pyrimidine metabolism; UMP biosynthesis via de novo pathway; (S)-dihydroorotate from bicarbonate: step 2/3. Catalyzes the condensation of carbamoyl phosphate and aspartate to form carbamoyl aspartate and inorganic phosphate, the committed step in the de novo pyrimidine nucleotide biosynthesis pathway. This chain is Aspartate carbamoyltransferase catalytic subunit, found in Vesicomyosocius okutanii subsp. Calyptogena okutanii (strain HA).